Reading from the N-terminus, the 423-residue chain is Serine--tRNA ligase (423 aa).

Position 228–230 (228–230 (TSE)) interacts with L-serine. Residue 259 to 261 (RLE) participates in ATP binding. Glu282 contacts L-serine. 346-349 (EISS) is a binding site for ATP. Position 384 (Ser384) interacts with L-serine.

This sequence belongs to the class-II aminoacyl-tRNA synthetase family. Type-1 seryl-tRNA synthetase subfamily. In terms of assembly, homodimer. The tRNA molecule binds across the dimer.

It localises to the cytoplasm. The catalysed reaction is tRNA(Ser) + L-serine + ATP = L-seryl-tRNA(Ser) + AMP + diphosphate + H(+). The enzyme catalyses tRNA(Sec) + L-serine + ATP = L-seryl-tRNA(Sec) + AMP + diphosphate + H(+). The protein operates within aminoacyl-tRNA biosynthesis; selenocysteinyl-tRNA(Sec) biosynthesis; L-seryl-tRNA(Sec) from L-serine and tRNA(Sec): step 1/1. Catalyzes the attachment of serine to tRNA(Ser). Is also able to aminoacylate tRNA(Sec) with serine, to form the misacylated tRNA L-seryl-tRNA(Sec), which will be further converted into selenocysteinyl-tRNA(Sec). This Ehrlichia canis (strain Jake) protein is Serine--tRNA ligase.